A 487-amino-acid chain; its full sequence is GTPase Der (487 aa).

EngA-type G domains lie at lysine 2–lysine 164 and isoleucine 203–alanine 374. GTP-binding positions include glycine 8–serine 15, aspartate 55–isoleucine 59, asparagine 116–aspartate 119, glycine 209–serine 216, aspartate 256–isoleucine 260, and asparagine 320–aspartate 323. The region spanning tyrosine 375 to asparagine 459 is the KH-like domain. A compositionally biased stretch (basic and acidic residues) spans asparagine 459–glutamate 480. A disordered region spans residues asparagine 459–valine 487.

This sequence belongs to the TRAFAC class TrmE-Era-EngA-EngB-Septin-like GTPase superfamily. EngA (Der) GTPase family. In terms of assembly, associates with the 50S ribosomal subunit.

Its function is as follows. GTPase that plays an essential role in the late steps of ribosome biogenesis. This is GTPase Der from Helicobacter hepaticus (strain ATCC 51449 / 3B1).